Reading from the N-terminus, the 240-residue chain is UDP-2,3-diacylglucosamine hydrolase (240 aa).

The Mn(2+) site is built by D8, H10, D41, N79, and H114. 79–80 contacts substrate; it reads NR. 5 residues coordinate substrate: D122, S160, N164, K167, and H195. The Mn(2+) site is built by H195 and H197.

It belongs to the LpxH family. Mn(2+) serves as cofactor.

It localises to the cell inner membrane. The enzyme catalyses UDP-2-N,3-O-bis[(3R)-3-hydroxytetradecanoyl]-alpha-D-glucosamine + H2O = 2-N,3-O-bis[(3R)-3-hydroxytetradecanoyl]-alpha-D-glucosaminyl 1-phosphate + UMP + 2 H(+). It participates in glycolipid biosynthesis; lipid IV(A) biosynthesis; lipid IV(A) from (3R)-3-hydroxytetradecanoyl-[acyl-carrier-protein] and UDP-N-acetyl-alpha-D-glucosamine: step 4/6. Functionally, hydrolyzes the pyrophosphate bond of UDP-2,3-diacylglucosamine to yield 2,3-diacylglucosamine 1-phosphate (lipid X) and UMP by catalyzing the attack of water at the alpha-P atom. Involved in the biosynthesis of lipid A, a phosphorylated glycolipid that anchors the lipopolysaccharide to the outer membrane of the cell. The chain is UDP-2,3-diacylglucosamine hydrolase from Shigella boydii serotype 18 (strain CDC 3083-94 / BS512).